Here is a 294-residue protein sequence, read N- to C-terminus: Thymidylate synthase 1/2 (294 aa).

DUMP contacts are provided by residues arginine 29 and 154–155 (RR). Residue cysteine 174 is the Nucleophile of the active site. DUMP contacts are provided by residues 194-197 (RSGD), asparagine 205, and 235-237 (HVY). Aspartate 197 serves as a coordination point for (6R)-5,10-methylene-5,6,7,8-tetrahydrofolate.

This sequence belongs to the thymidylate synthase family.

The catalysed reaction is dUMP + (6R)-5,10-methylene-5,6,7,8-tetrahydrofolate = 7,8-dihydrofolate + dTMP. Its pathway is pyrimidine metabolism; dTTP biosynthesis. In Encephalitozoon cuniculi (strain GB-M1) (Microsporidian parasite), this protein is Thymidylate synthase 1/2 (TS-1).